The primary structure comprises 50 residues: Protein PndA (50 aa).

A helical membrane pass occupies residues 5 to 25 (TFLMMLIVICVTILCFVWMVR).

This sequence belongs to the Hok/Gef family.

It is found in the cell inner membrane. Its function is as follows. Toxic component of a type I toxin-antitoxin (TA) system. When expressed is involved in cellular Mg(2+) release and degradation of stable RNA. This Escherichia coli protein is Protein PndA (pndA).